Here is a 637-residue protein sequence, read N- to C-terminus: MQTNKGSLLWENLRVDLEPWLKDAIRSLNYPTMTPVQASTIPLLSGNKDVIVEAVTGSGKTLAFAIPVLQKVSKRLYQVPEGEEKPEPVKRGHMLAIVMAPTRELAKQIQMVFDKVLELLPEEDSYEPRIKTQLLVGFLGNVREDLDSYQENRPQILIATPGRLLDFMSLQIVKTSSLEIVILDEADKLLDMSFETDVIKILKMLPKQRRTGLFSATISAAGDTIFRTGMNNPVKLQVKTKNFLGEQNNAPTSLQLSYMMIEPEHKLTTMLQMLRDNQFKKAIVYFPTCTSVKHFYQMLSKLCKSSANDIDISALLFFSLHGQLTTKSRLNTLEKFTEGNDESKKYILMATDVAARGIDIPDVDLVIQIDPPTDPSVFLHRCGRTGRANKVGRAIVMLNNDTQEEDYVGFMEVKSVFMTKIDPPEDKDNHSFHNKFQKKLRKYMLEDRARHELAVKSYVGFVRYYSKHIASLIFRLASLDYIAIAKMYGLLRLPKMPESRYIENEKMPEDGWLGEVVDMDTYAYLDKSAEKARLENLEKDKLAKAENAKRRKELKVKNEAWSSKTEKRETKLERKEKMKRKREAIEKQLEAEQERGGLDEEEVKEDWKDLVRKNKKKQKSNGGGGGGGVLQGSFDDL.

The Q motif signature appears at 10–38 (WENLRVDLEPWLKDAIRSLNYPTMTPVQA). Residues 41–236 (IPLLSGNKDV…RTGMNNPVKL (196 aa)) form the Helicase ATP-binding domain. 54–61 (AVTGSGKT) is an ATP binding site. The short motif at 184-187 (DEAD) is the DEAD box element. The 179-residue stretch at 266-444 (KLTTMLQMLR…KFQKKLRKYM (179 aa)) folds into the Helicase C-terminal domain. The stretch at 528-597 (SAEKARLENL…QLEAEQERGG (70 aa)) forms a coiled coil. The segment at 554–637 (LKVKNEAWSS…GVLQGSFDDL (84 aa)) is disordered. 2 stretches are compositionally biased toward basic and acidic residues: residues 564 to 576 (KTEK…ERKE) and 583 to 598 (EAIE…RGGL). Residues 621-630 (NGGGGGGGVL) are compositionally biased toward gly residues.

This sequence belongs to the DEAD box helicase family. DDX55/SPB4 subfamily. In terms of assembly, component of pre-60S ribosomal complexes.

The protein localises to the nucleus. Its subcellular location is the nucleolus. It carries out the reaction ATP + H2O = ADP + phosphate + H(+). ATP-binding RNA helicase involved in the biogenesis of 60S ribosomal subunits. Binds 90S pre-ribosomal particles and dissociates from pre-60S ribosomal particles after processing of 27SB pre-rRNA. Required for the normal formation of 18S rRNA through the processing of pre-rRNAs at sites A0, A1 and A2, and the normal formation of 25S and 5.8S rRNAs through the processing of pre-rRNAs at sites C1 and C2. The polypeptide is ATP-dependent rRNA helicase SPB4 (Lodderomyces elongisporus (strain ATCC 11503 / CBS 2605 / JCM 1781 / NBRC 1676 / NRRL YB-4239) (Yeast)).